A 357-amino-acid chain; its full sequence is UDP-N-acetylglucosamine--N-acetylmuramyl-(pentapeptide) pyrophosphoryl-undecaprenol N-acetylglucosamine transferase (357 aa).

Residues 12-14, Asn124, Arg163, Ser189, Ile243, 262-267, and Gln288 contribute to the UDP-N-acetyl-alpha-D-glucosamine site; these read TGG and ALTVSE.

This sequence belongs to the glycosyltransferase 28 family. MurG subfamily.

The protein localises to the cell inner membrane. The enzyme catalyses di-trans,octa-cis-undecaprenyl diphospho-N-acetyl-alpha-D-muramoyl-L-alanyl-D-glutamyl-meso-2,6-diaminopimeloyl-D-alanyl-D-alanine + UDP-N-acetyl-alpha-D-glucosamine = di-trans,octa-cis-undecaprenyl diphospho-[N-acetyl-alpha-D-glucosaminyl-(1-&gt;4)]-N-acetyl-alpha-D-muramoyl-L-alanyl-D-glutamyl-meso-2,6-diaminopimeloyl-D-alanyl-D-alanine + UDP + H(+). It functions in the pathway cell wall biogenesis; peptidoglycan biosynthesis. Cell wall formation. Catalyzes the transfer of a GlcNAc subunit on undecaprenyl-pyrophosphoryl-MurNAc-pentapeptide (lipid intermediate I) to form undecaprenyl-pyrophosphoryl-MurNAc-(pentapeptide)GlcNAc (lipid intermediate II). The sequence is that of UDP-N-acetylglucosamine--N-acetylmuramyl-(pentapeptide) pyrophosphoryl-undecaprenol N-acetylglucosamine transferase from Pseudomonas aeruginosa (strain LESB58).